The following is a 376-amino-acid chain: Chaperone protein DnaJ (376 aa).

Residues 4–69 (DFYETLGVQK…QKRAAYDRFG (66 aa)) enclose the J domain. The CR-type zinc finger occupies 133–211 (GKTAQIRVPA…CAGQGRVTEE (79 aa)). Zn(2+)-binding residues include C146, C149, C163, C166, C185, C188, C199, and C202. 4 CXXCXGXG motif repeats span residues 146–153 (CTECSGSG), 163–170 (CSMCHGHG), 185–192 (CPQCQGRG), and 199–206 (CPKCAGQG).

Belongs to the DnaJ family. Homodimer. It depends on Zn(2+) as a cofactor.

The protein localises to the cytoplasm. Functionally, participates actively in the response to hyperosmotic and heat shock by preventing the aggregation of stress-denatured proteins and by disaggregating proteins, also in an autonomous, DnaK-independent fashion. Unfolded proteins bind initially to DnaJ; upon interaction with the DnaJ-bound protein, DnaK hydrolyzes its bound ATP, resulting in the formation of a stable complex. GrpE releases ADP from DnaK; ATP binding to DnaK triggers the release of the substrate protein, thus completing the reaction cycle. Several rounds of ATP-dependent interactions between DnaJ, DnaK and GrpE are required for fully efficient folding. Also involved, together with DnaK and GrpE, in the DNA replication of plasmids through activation of initiation proteins. In Mesorhizobium japonicum (strain LMG 29417 / CECT 9101 / MAFF 303099) (Mesorhizobium loti (strain MAFF 303099)), this protein is Chaperone protein DnaJ.